Here is an 85-residue protein sequence, read N- to C-terminus: UPF0297 protein Cbei_1105 (85 aa).

This sequence belongs to the UPF0297 family.

This Clostridium beijerinckii (strain ATCC 51743 / NCIMB 8052) (Clostridium acetobutylicum) protein is UPF0297 protein Cbei_1105.